We begin with the raw amino-acid sequence, 757 residues long: Inhibitor of nuclear factor kappa-B kinase subunit beta (757 aa).

The Protein kinase domain occupies 15-300 (WEMKERLGTG…DPQYGPNGCF (286 aa)). Residues 21–29 (LGTGGFGNV) and K44 each bind ATP. The active-site Proton acceptor is the D145. A Glycyl lysine isopeptide (Lys-Gly) (interchain with G-Cter in ubiquitin) cross-link involves residue K163. S177 carries the post-translational modification Phosphoserine; by TBK1 and PKC/PRKCZ. The residue at position 179 (C179) is an S-nitrosocysteine. S181 carries the phosphoserine; by TBK1, PKC/PRKCZ and PDPK1 modification. Residue P191 is modified to Hydroxyproline. A leucine-zipper region spans residues 458 to 479 (LLRNNSCLSKMKNAMASTAQQL). A Phosphoserine; by autocatalysis modification is found at S670. Position 672 is a phosphoserine (S672). A phosphoserine; by autocatalysis mark is found at S675, S682, S689, S692, S697, S705, S733, and S740. The segment at 682–703 (SHPGHLMSQPSSACDSLPDSDK) is disordered. The tract at residues 737–742 (LDWSWL) is NEMO-binding.

It belongs to the protein kinase superfamily. Ser/Thr protein kinase family. I-kappa-B kinase subfamily. Component of the I-kappa-B-kinase (IKK) core complex consisting of CHUK, IKBKB and IKBKG; probably four alpha/CHUK-beta/IKBKB dimers are associated with four gamma/IKBKG subunits. The IKK core complex seems to associate with regulatory or adapter proteins to form a IKK-signalosome holo-complex. The IKK complex associates with TERF2IP/RAP1, leading to promote IKK-mediated phosphorylation of RELA/p65. Part of a complex composed of NCOA2, NCOA3, CHUK/IKKA, IKBKB, IKBKG and CREBBP. Part of a 70-90 kDa complex at least consisting of CHUK/IKKA, IKBKB, NFKBIA, RELA, ELP1 and MAP3K14. Found in a membrane raft complex, at least composed of BCL10, CARD11, DPP4 and IKBKB. Interacts with SQSTM1 through PRKCZ or PRKCI. Forms an NGF-induced complex with IKBKB, PRKCI and TRAF6. May interact with MAVS/IPS1. Interacts with NALP2. Interacts with TICAM1. Interacts with FAF1; the interaction disrupts the IKK complex formation. Interacts with ATM. Part of a ternary complex consisting of TANK, IKBKB and IKBKG. Interacts with NIBP; the interaction is direct. Interacts with ARRB1 and ARRB2. Interacts with TRIM21. Interacts with NLRC5; prevents IKBKB phosphorylation and kinase activity. Interacts with PDPK1. Interacts with EIF2AK2/PKR. The phosphorylated form interacts with PPM1A and PPM1B. Interacts with ZNF268 isoform 2; the interaction is further increased in a TNF-alpha-dependent manner. Interacts with IKBKE. Interacts with ZC3H12A. Interacts with AKAP13. Interacts with LRRC14; disrupts IKBKB-IKBKG interaction preventing I-kappa-B-kinase (IKK) core complex formation and leading to a decrease of IKBKB phosphorylation and NF-kappaB activation. Interacts with SASH1. Interacts with ARFIP2. Interacts with FKBP5. In terms of processing, upon cytokine stimulation, phosphorylated on Ser-177 and Ser-181 by MEKK1 and/or MAP3K14/NIK as well as TBK1 and PRKCZ; which enhances activity. Phosphorylated by MAP3K7/TAK1 in response to NOD1 and NOD2 signaling, promoting activation and phosphorylation of NF-kappa-B inhibitors, leading to NF-kappa-B activation. Once activated, autophosphorylates on the C-terminal serine cluster; which decreases activity and prevents prolonged activation of the inflammatory response. Phosphorylated by the IKK-related kinases TBK1 and IKBKE, which is associated with reduced CHUK/IKKA and IKBKB activity and NF-kappa-B-dependent gene transcription. Dephosphorylated at Ser-177 and Ser-181 by PPM1A and PPM1B. Ubiquitinated. Monoubiquitination involves TRIM21 that leads to inhibition of Tax-induced NF-kappa-B signaling. 'Ser-163' may not serve as a monoubiquitination site. Ubiquitination on 'Ser-163' may modulate phosphorylation on C-terminal serine residues. Post-translationally, hydroxylated by PHD1/EGLN2, loss of hydroxylation under hypoxic conditions results in activation of NF-kappa-B.

The protein resides in the cytoplasm. It is found in the nucleus. The protein localises to the membrane raft. The enzyme catalyses L-seryl-[I-kappa-B protein] + ATP = O-phospho-L-seryl-[I-kappa-B protein] + ADP + H(+). It carries out the reaction L-seryl-[protein] + ATP = O-phospho-L-seryl-[protein] + ADP + H(+). The catalysed reaction is L-threonyl-[protein] + ATP = O-phospho-L-threonyl-[protein] + ADP + H(+). In terms of biological role, serine kinase that plays an essential role in the NF-kappa-B signaling pathway which is activated by multiple stimuli such as inflammatory cytokines, bacterial or viral products, DNA damages or other cellular stresses. Acts as a part of the canonical IKK complex in the conventional pathway of NF-kappa-B activation. Phosphorylates inhibitors of NF-kappa-B on 2 critical serine residues. These modifications allow polyubiquitination of the inhibitors and subsequent degradation by the proteasome. In turn, free NF-kappa-B is translocated into the nucleus and activates the transcription of hundreds of genes involved in immune response, growth control, or protection against apoptosis. In addition to the NF-kappa-B inhibitors, phosphorylates several other components of the signaling pathway including NEMO/IKBKG, NF-kappa-B subunits RELA and NFKB1, as well as IKK-related kinases TBK1 and IKBKE. IKK-related kinase phosphorylations may prevent the overproduction of inflammatory mediators since they exert a negative regulation on canonical IKKs. Phosphorylates FOXO3, mediating the TNF-dependent inactivation of this pro-apoptotic transcription factor. Also phosphorylates other substrates including NAA10, NCOA3, BCL10 and IRS1. Phosphorylates RIPK1 at 'Ser-25' which represses its kinase activity and consequently prevents TNF-mediated RIPK1-dependent cell death. Phosphorylates the C-terminus of IRF5, stimulating IRF5 homodimerization and translocation into the nucleus. This is Inhibitor of nuclear factor kappa-B kinase subunit beta (Ikbkb) from Rattus norvegicus (Rat).